Reading from the N-terminus, the 225-residue chain is Probable polyketide biosynthesis zinc-dependent hydrolase PksB (225 aa).

The Zn(2+) site is built by histidine 62, histidine 64, aspartate 66, histidine 67, histidine 123, aspartate 140, and histidine 181.

It belongs to the metallo-beta-lactamase superfamily. Zn(2+) serves as cofactor.

It is found in the cytoplasm. It functions in the pathway antibiotic biosynthesis; bacillaene biosynthesis. In terms of biological role, probably involved in some intermediate steps for the synthesis of the antibiotic polyketide bacillaene which is involved in secondary metabolism. In Bacillus subtilis (strain 168), this protein is Probable polyketide biosynthesis zinc-dependent hydrolase PksB (pksB).